The sequence spans 225 residues: Cytochrome c oxidase subunit 2 (225 aa).

The Mitochondrial intermembrane portion of the chain corresponds to 1–25; the sequence is MSTWMMFMFQESNSLYADNLVSFHN. A helical transmembrane segment spans residues 26–47; sequence MVMIIVIMISTLTVYIIFDLFL. Residues 48-62 lie on the Mitochondrial matrix side of the membrane; the sequence is NKFSNLYLLKNHNIE. The chain crosses the membrane as a helical span at residues 63–82; sequence IIWMIVPIVILLIICFPSLK. At 83-225 the chain is on the mitochondrial intermembrane side; the sequence is ILYLIDEIVN…YFMNWIYKMN (143 aa). Cu cation contacts are provided by H159, C194, E196, C198, H202, and M205. E196 lines the Mg(2+) pocket.

It belongs to the cytochrome c oxidase subunit 2 family. In terms of assembly, component of the cytochrome c oxidase (complex IV, CIV), a multisubunit enzyme composed of a catalytic core of 3 subunits and several supernumerary subunits. The complex exists as a monomer or a dimer and forms supercomplexes (SCs) in the inner mitochondrial membrane with ubiquinol-cytochrome c oxidoreductase (cytochrome b-c1 complex, complex III, CIII). Cu cation is required as a cofactor.

The protein resides in the mitochondrion inner membrane. The enzyme catalyses 4 Fe(II)-[cytochrome c] + O2 + 8 H(+)(in) = 4 Fe(III)-[cytochrome c] + 2 H2O + 4 H(+)(out). Component of the cytochrome c oxidase, the last enzyme in the mitochondrial electron transport chain which drives oxidative phosphorylation. The respiratory chain contains 3 multisubunit complexes succinate dehydrogenase (complex II, CII), ubiquinol-cytochrome c oxidoreductase (cytochrome b-c1 complex, complex III, CIII) and cytochrome c oxidase (complex IV, CIV), that cooperate to transfer electrons derived from NADH and succinate to molecular oxygen, creating an electrochemical gradient over the inner membrane that drives transmembrane transport and the ATP synthase. Cytochrome c oxidase is the component of the respiratory chain that catalyzes the reduction of oxygen to water. Electrons originating from reduced cytochrome c in the intermembrane space (IMS) are transferred via the dinuclear copper A center (CU(A)) of subunit 2 and heme A of subunit 1 to the active site in subunit 1, a binuclear center (BNC) formed by heme A3 and copper B (CU(B)). The BNC reduces molecular oxygen to 2 water molecules using 4 electrons from cytochrome c in the IMS and 4 protons from the mitochondrial matrix. This chain is Cytochrome c oxidase subunit 2 (COII), found in Apis florea (Dwarf honeybee).